A 368-amino-acid chain; its full sequence is MTSIVLFCRPGFEKECGAEIQEKAAWNEMYGYLELKINQGLVFFHLHESAHGEALMNKLPLKRLIFARQWFVTVTDKIDLPDYNRVEAITEALGNDWQYSDLRMEMADDNDGKSLSKFCRKLSVPLRQALRKNKVLTQKGNNSADDPEGAILHALFLSGQEVILGFSLARNSSPHVMGIPRLKFPSASPSRSTLKLDEAFLHFIPRDEWDERLTSGMNAVDLGSAPGGWTYQLVRRGMMVTAIDNGLMAESLMETGQVKHKMMDGFKYVPLKQNVYWLVCDMIEKPQRVAKLMSEWLLHGHCKEAMFNLKLPMKGRYQQVTNDLQTIKDAFTKHNVKYELYAKHLYYDREEVTVHARLLSPAPLRAKE.

Residues S192, 225-228 (APGG), D244, D264, and D281 contribute to the S-adenosyl-L-methionine site. The Proton acceptor role is filled by K310.

It belongs to the class I-like SAM-binding methyltransferase superfamily. RNA methyltransferase RlmE family. RlmM subfamily. In terms of assembly, monomer.

The protein resides in the cytoplasm. It catalyses the reaction cytidine(2498) in 23S rRNA + S-adenosyl-L-methionine = 2'-O-methylcytidine(2498) in 23S rRNA + S-adenosyl-L-homocysteine + H(+). Catalyzes the 2'-O-methylation at nucleotide C2498 in 23S rRNA. The polypeptide is Ribosomal RNA large subunit methyltransferase M (Colwellia psychrerythraea (strain 34H / ATCC BAA-681) (Vibrio psychroerythus)).